The chain runs to 187 residues: Protein GrpE (187 aa).

Positions 1-11 are enriched in basic and acidic residues; it reads MTDSSNEHETE. The interval 1 to 23 is disordered; the sequence is MTDSSNEHETENPSVPNPDNEIQ.

It belongs to the GrpE family. In terms of assembly, homodimer.

It localises to the cytoplasm. Participates actively in the response to hyperosmotic and heat shock by preventing the aggregation of stress-denatured proteins, in association with DnaK and GrpE. It is the nucleotide exchange factor for DnaK and may function as a thermosensor. Unfolded proteins bind initially to DnaJ; upon interaction with the DnaJ-bound protein, DnaK hydrolyzes its bound ATP, resulting in the formation of a stable complex. GrpE releases ADP from DnaK; ATP binding to DnaK triggers the release of the substrate protein, thus completing the reaction cycle. Several rounds of ATP-dependent interactions between DnaJ, DnaK and GrpE are required for fully efficient folding. The protein is Protein GrpE of Chlamydia felis (strain Fe/C-56) (Chlamydophila felis).